A 337-amino-acid chain; its full sequence is Alanine racemase (337 aa).

The active-site Proton acceptor; specific for D-alanine is K33. K33 is subject to N6-(pyridoxal phosphate)lysine. R118 contributes to the substrate binding site. Y246 (proton acceptor; specific for L-alanine) is an active-site residue. M292 lines the substrate pocket.

Belongs to the alanine racemase family. It depends on pyridoxal 5'-phosphate as a cofactor.

It catalyses the reaction L-alanine = D-alanine. The protein operates within amino-acid biosynthesis; D-alanine biosynthesis; D-alanine from L-alanine: step 1/1. Catalyzes the interconversion of L-alanine and D-alanine. May also act on other amino acids. The protein is Alanine racemase (alr) of Campylobacter concisus (strain 13826).